The primary structure comprises 270 residues: Fluoride-specific ion channel FluC 1 (270 aa).

A run of 4 helical transmembrane segments spans residues 4–24, 35–55, 67–87, and 96–116; these read IIILVVIGGAFGAMTREFIML, LDILVANVVACFLLGTVTALY, IIGTGMMGGVSTFSSFAYGSV, and AFLIAAAYVTVSVVAGYVAVL. Residues Gly-74 and Ser-77 each coordinate Na(+).

It belongs to the fluoride channel Fluc/FEX (TC 1.A.43) family.

The protein localises to the cell inner membrane. It carries out the reaction fluoride(in) = fluoride(out). With respect to regulation, na(+) is not transported, but it plays an essential structural role and its presence is essential for fluoride channel function. In terms of biological role, fluoride-specific ion channel. Important for reducing fluoride concentration in the cell, thus reducing its toxicity. The protein is Fluoride-specific ion channel FluC 1 of Brucella abortus biovar 1 (strain 9-941).